A 202-amino-acid polypeptide reads, in one-letter code: Glycerol-3-phosphate acyltransferase (202 aa).

A run of 6 helical transmembrane segments spans residues 2-22 (INLLFAVIAYLIGSVSFAVVV), 51-71 (KAAIFTLIGDALKGLAAVLLA), 80-100 (VDETGIALVALAVFLGHLFPL), 116-136 (ILFAIDPILGAGTLATWLIIA), 137-157 (FFFRYSSLAALISAIFAPFFY), and 158-178 (VLMNGVDIMAGAILVISVLLI).

Belongs to the PlsY family. In terms of assembly, probably interacts with PlsX.

The protein resides in the cell inner membrane. It carries out the reaction an acyl phosphate + sn-glycerol 3-phosphate = a 1-acyl-sn-glycero-3-phosphate + phosphate. It participates in lipid metabolism; phospholipid metabolism. Its function is as follows. Catalyzes the transfer of an acyl group from acyl-phosphate (acyl-PO(4)) to glycerol-3-phosphate (G3P) to form lysophosphatidic acid (LPA). This enzyme utilizes acyl-phosphate as fatty acyl donor, but not acyl-CoA or acyl-ACP. The protein is Glycerol-3-phosphate acyltransferase of Cupriavidus metallidurans (strain ATCC 43123 / DSM 2839 / NBRC 102507 / CH34) (Ralstonia metallidurans).